The sequence spans 481 residues: Cysteine--tRNA ligase (481 aa).

C29 is a Zn(2+) binding site. Residues 31–41 (PTVYDYSHLGH) carry the 'HIGH' region motif. Residues C210, H235, and E239 each coordinate Zn(2+). The 'KMSKS' region motif lies at 272 to 276 (KMSKS). K275 provides a ligand contact to ATP.

Belongs to the class-I aminoacyl-tRNA synthetase family. Monomer. It depends on Zn(2+) as a cofactor.

It localises to the cytoplasm. It catalyses the reaction tRNA(Cys) + L-cysteine + ATP = L-cysteinyl-tRNA(Cys) + AMP + diphosphate. This is Cysteine--tRNA ligase from Anaeromyxobacter dehalogenans (strain 2CP-C).